The chain runs to 757 residues: Chloride anion exchanger (757 aa).

The Cytoplasmic portion of the chain corresponds to 1-71; it reads MIEAIGNQYV…SWLPAYKIKE (71 aa). A helical transmembrane segment spans residues 72 to 92; sequence WLLSDIVSGISTGLVAVLQGL. Alanine 93 is a topological domain (extracellular). A helical membrane pass occupies residues 94-114; sequence FALLVNIPPAYGLYAAFFPVI. Residues 115–124 are Cytoplasmic-facing; the sequence is TYFFLGTSRH. A helical membrane pass occupies residues 125-145; the sequence is ISVGPFPVLSMMVGVVVTRVV. At 146-176 the chain is on the extracellular side; that stretch reads SDPNASSELSSSSTENDSFIEEKVMVAASVT. N-linked (GlcNAc...) asparagine glycans are attached at residues asparagine 149 and asparagine 161. A helical membrane pass occupies residues 177–197; sequence VLSGIIQLLLGVLQVGFVVIY. Residues 198-201 are Cytoplasmic-facing; the sequence is LSES. The helical transmembrane segment at 202–222 threads the bilayer; that stretch reads LISGFTTAAAIHVLVSQLKFM. At 223-250 the chain is on the extracellular side; sequence LQLPVPAYSDPFSIFKVLESVFTQIQKT. Residues 251-271 form a helical membrane-spanning segment; sequence NIADLVTSVIILVVVFVFKEI. At 272–278 the chain is on the cytoplasmic side; sequence NQRYRSK. The chain crosses the membrane as a helical span at residues 279-299; it reads LPVPIPIELIMTVIATGVSYG. Over 300–335 the chain is Extracellular; sequence CNFEDRFGVAVVGNMSLGFQPPITPSVEVFQDTIGD. The helical transmembrane segment at 336-356 threads the bilayer; that stretch reads SFGIAIVGFAVAFSVASVYSL. At 357 to 367 the chain is on the cytoplasmic side; the sequence is KYDYPIDGNQE. A helical transmembrane segment spans residues 368 to 388; the sequence is LIALGVSNIFTGAFKGFAGST. Over 389-404 the chain is Extracellular; sequence ALSRSGVQESTGGKTQ. The chain crosses the membrane as a helical span at residues 405–425; it reads VAGLLSAVIVLIVIVAIGFLL. The Cytoplasmic portion of the chain corresponds to 426-462; the sequence is QPLQKSVLAALALGNLKGMLMQFAEIGRLWKKDKYDC. A helical membrane pass occupies residues 463-483; the sequence is LIWIMTFIFAIVLGLGLGLAA. Topologically, residues 484 to 757 are extracellular; the sequence is SVAFQLLTIV…ECQVPVETKF (274 aa). The region spanning 518 to 713 is the STAS domain; that stretch reads NYAEVYEPEG…LTIHDAILHI (196 aa). The short motif at 754–757 is the PDZ-binding element; the sequence is ETKF.

This sequence belongs to the SLC26A/SulP transporter (TC 2.A.53) family. As to quaternary structure, interacts with PDZK1. Interacts with CFTR, SLC26A6 and NHERF1. Interacts (via PDZ-binding motif) with NHERF4 (via the third PDZ domain). This interaction leads to decreased expression of SLC26A3 on the cell membrane resulting in its reduced exchanger activity. Post-translationally, N-glycosylation is required for efficient cell surface expression, and protection from proteolytic degradation. As to expression, expressed in spermatogenic cells. Expressed at high levels in cecum and colon and at lower levels in small intestine.

The protein resides in the apical cell membrane. It localises to the membrane. Its subcellular location is the cell membrane. It carries out the reaction hydrogencarbonate(in) + 2 chloride(out) = hydrogencarbonate(out) + 2 chloride(in). Its function is as follows. Mediates chloride-bicarbonate exchange with a chloride bicarbonate stoichiometry of 2:1 in the intestinal epithelia. Plays a role in the chloride and bicarbonate homeostasis during sperm epididymal maturation and capacitation. This Mus musculus (Mouse) protein is Chloride anion exchanger (Slc26a3).